The following is a 533-amino-acid chain: MASSNRHWPSMFRSKHATQPWQTQPDMAGSPPSLLSGSSAGSAGGGGYSLKSSPFSSVGEERVPDPKPRWNPRPEQIRILEAIFNSGMVNPPRDEIPRIRMQLQEYGQVGDANVFYWFQNRKSRSKNKLRSGGTGRAGLGLGGNRASAPAAAHREAVAPSFTPPPPILPAPQPVQPQQQLVSPVAAPTSSSSSSSDRSSGSSKPARATSTQAMSVTTAMDLLSPLAAACHQQMLYQGQPLESPPAPAPKVHGIVPHDEPVFLQWPQSPCLSAVDLGAAILGGQYMHLPVPAPQPPSSPGAAGMFWGLCNDVQAPNNTGHKSCAWSAGLGQHWCGSADQLGLGKSSAASIATVSRPEEAHDVDATKHGLLQYGFGITTPQVHVDVTSSAAGVLPPVPSSPSPPNAAVTVASVAATASLTDFAASAISAGAVANNQFQGLADFGLVAGACSGAGAAAAAAAPEAGSSVAAVVCVSVAGAAPPLFYPAAHFNVRHYGDEAELLRYRGGSRTEPVPVDESGVTVEPLQQGAVYIVVM.

Disordered regions lie at residues 1–74 (MASS…NPRP) and 125–212 (SKNK…STQA). Residues 28 to 41 (AGSPPSLLSGSSAG) show a composition bias toward low complexity. Positions 59-68 (GEERVPDPKP) are enriched in basic and acidic residues. A DNA-binding region (homeobox; WUS-type) is located at residues 65 to 129 (DPKPRWNPRP…NRKSRSKNKL (65 aa)). A compositionally biased stretch (gly residues) spans 132–143 (GGTGRAGLGLGG). Residues 161-174 (FTPPPPILPAPQPV) are compositionally biased toward pro residues. Low complexity predominate over residues 175–202 (QPQQQLVSPVAAPTSSSSSSSDRSSGSS).

The protein belongs to the WUS homeobox family.

The protein resides in the nucleus. Transcription factor which may be involved in developmental processes. This chain is WUSCHEL-related homeobox 7 (WOX7), found in Oryza sativa subsp. japonica (Rice).